We begin with the raw amino-acid sequence, 592 residues long: Beta-fructofuranosidase, insoluble isoenzyme 2 (592 aa).

A signal peptide spans 1 to 40 (MLIRCFHIKMALVTCFHSMLFLSAVVFIFSLDVNIRGVEA). Residue D75 is part of the active site. N171, N195, N310, N347, and N568 each carry an N-linked (GlcNAc...) asparagine glycan.

Belongs to the glycosyl hydrolase 32 family.

It is found in the secreted. The protein resides in the cell wall. The catalysed reaction is Hydrolysis of terminal non-reducing beta-D-fructofuranoside residues in beta-D-fructofuranosides.. Functionally, may play an important role in phloem unloading and in stress response. This chain is Beta-fructofuranosidase, insoluble isoenzyme 2 (INV2), found in Daucus carota (Wild carrot).